Reading from the N-terminus, the 293-residue chain is Elongation factor Ts (293 aa).

Positions T80–V83 are involved in Mg(2+) ion dislocation from EF-Tu.

It belongs to the EF-Ts family.

The protein resides in the cytoplasm. Its function is as follows. Associates with the EF-Tu.GDP complex and induces the exchange of GDP to GTP. It remains bound to the aminoacyl-tRNA.EF-Tu.GTP complex up to the GTP hydrolysis stage on the ribosome. In Burkholderia cenocepacia (strain HI2424), this protein is Elongation factor Ts.